The following is a 162-amino-acid chain: ATP-dependent Clp protease adapter protein CLPS1, chloroplastic (162 aa).

A chloroplast-targeting transit peptide spans 1 to 58 (MAASCLRPAPTASAQMMTRSPVAGLPRPCSALQRSGCTLQGAFGTFAPQTTRTFVVTW).

This sequence belongs to the ClpS family.

The protein localises to the plastid. It is found in the chloroplast stroma. Functionally, small adapter protein that modulate the activity of plastid Clp protease system (CLPC). Probably involved in substrate selection for plastid CLPC. This Chlamydomonas reinhardtii (Chlamydomonas smithii) protein is ATP-dependent Clp protease adapter protein CLPS1, chloroplastic.